The following is a 339-amino-acid chain: Lipoate-protein ligase A (339 aa).

The region spanning 29–216 is the BPL/LPL catalytic domain; that stretch reads DPSQQVLFLW…SFENFYAGKA (188 aa). ATP is bound by residues Arg71, 76-79, and Lys134; that span reads GAVF. Position 134 (Lys134) interacts with (R)-lipoate.

The protein belongs to the LplA family. In terms of assembly, monomer.

It is found in the cytoplasm. The enzyme catalyses L-lysyl-[lipoyl-carrier protein] + (R)-lipoate + ATP = N(6)-[(R)-lipoyl]-L-lysyl-[lipoyl-carrier protein] + AMP + diphosphate + H(+). The protein operates within protein modification; protein lipoylation via exogenous pathway; protein N(6)-(lipoyl)lysine from lipoate: step 1/2. It participates in protein modification; protein lipoylation via exogenous pathway; protein N(6)-(lipoyl)lysine from lipoate: step 2/2. Catalyzes both the ATP-dependent activation of exogenously supplied lipoate to lipoyl-AMP and the transfer of the activated lipoyl onto the lipoyl domains of lipoate-dependent enzymes. The sequence is that of Lipoate-protein ligase A from Bdellovibrio bacteriovorus (strain ATCC 15356 / DSM 50701 / NCIMB 9529 / HD100).